The chain runs to 855 residues: uncharacterized protein (855 aa).

10 consecutive transmembrane segments (helical) span residues 24-44 (PFQY…IVAI), 256-276 (AFTV…IFLI), 318-338 (IGTG…IGLV), 361-381 (LLKG…PPAI), 404-424 (LMPW…LMLW), 430-450 (LVVA…IAPP), 487-507 (IAIA…ISVG), 725-745 (ITIA…LSAL), 780-800 (MGGM…WILV), and 821-841 (FLRA…YPAW).

This sequence belongs to the ABC-4 integral membrane protein family. In terms of assembly, the complex is probably composed of two ATP-binding proteins (Rv0986) and two transmembrane proteins (Rv0987).

The protein resides in the cell membrane. In terms of biological role, probably part of an ABC transporter complex involved in host cell binding either through secretion of an adherence factor or through maintaining the architecture and integrity of the mycobacterial cell envelope. Could be required for host endothelial-cell invasion and/or intracellular survival. This is an uncharacterized protein from Mycobacterium tuberculosis (strain ATCC 25618 / H37Rv).